We begin with the raw amino-acid sequence, 398 residues long: MLVLLIVFFNSYYTHCSHHSLYSFHCTPPDPAMKQSPLHRPSRPLLALGIEGSANKLGCGIISHSPSPTGGPTLVMVLSNVRHTYITPPGEGFLPSDTARHHREWVVKVIEEAVRKAGVRMGDLDCIAFTKGPGMGTPLQVGALVARTLSLLHNIPLVGVNHCVGHIEMGRQITSSHNPIVLYVSGGNTQVIAYSQQRYRIFGETLDIAIGNCLDRFARVIGLRNDPSPGYNIEKEAKKGKRLVQLPYGTKGMDVSLAGILHSVEAYTKDKRYRSWDQVNDVEEDIITPYDLCFSLQETTFAMLVEITERAMAHVGAKDVLIVGGVGCNLRLQEMMGIMASERGGRVFATDESFCIDNGIMIAQAGLLAFRMGNTMPLEKTGVTQRYRTDAVHVAWRA.

3 residues coordinate a divalent metal cation: histidine 162, histidine 166, and tyrosine 183. Residues 183-187, aspartate 215, glycine 230, glutamate 234, and asparagine 329 contribute to the substrate site; that span reads YVSGG. Aspartate 357 contacts a divalent metal cation.

Belongs to the KAE1 / TsaD family. Component of the EKC/KEOPS complex composed of at least BUD32, CGI121, GON7, KAE1 and PCC1; the whole complex dimerizes. Requires a divalent metal cation as cofactor.

Its subcellular location is the cytoplasm. The protein localises to the nucleus. The catalysed reaction is L-threonylcarbamoyladenylate + adenosine(37) in tRNA = N(6)-L-threonylcarbamoyladenosine(37) in tRNA + AMP + H(+). Its function is as follows. Component of the EKC/KEOPS complex that is required for the formation of a threonylcarbamoyl group on adenosine at position 37 (t(6)A37) in tRNAs that read codons beginning with adenine. The complex is probably involved in the transfer of the threonylcarbamoyl moiety of threonylcarbamoyl-AMP (TC-AMP) to the N6 group of A37. KAE1 likely plays a direct catalytic role in this reaction, but requires other protein(s) of the complex to fulfill this activity. The EKC/KEOPS complex also promotes both telomere uncapping and telomere elongation. The complex is required for efficient recruitment of transcriptional coactivators. The chain is tRNA N6-adenosine threonylcarbamoyltransferase from Cryptococcus neoformans var. neoformans serotype D (strain B-3501A) (Filobasidiella neoformans).